The following is a 505-amino-acid chain: AMP phosphorylase (505 aa).

Residues G170, 196 to 201 (SRAITS), and T205 each bind AMP. The active-site Proton donor is the D258. AMP is bound by residues S266 and K290.

Belongs to the thymidine/pyrimidine-nucleoside phosphorylase family. Type 2 subfamily.

The catalysed reaction is AMP + phosphate = alpha-D-ribose 1,5-bisphosphate + adenine. The enzyme catalyses CMP + phosphate = cytosine + alpha-D-ribose 1,5-bisphosphate. It catalyses the reaction UMP + phosphate = alpha-D-ribose 1,5-bisphosphate + uracil. Functionally, catalyzes the conversion of AMP and phosphate to adenine and ribose 1,5-bisphosphate (R15P). Exhibits phosphorylase activity toward CMP and UMP in addition to AMP. Functions in an archaeal AMP degradation pathway, together with R15P isomerase and RubisCO. In Methanococcus vannielii (strain ATCC 35089 / DSM 1224 / JCM 13029 / OCM 148 / SB), this protein is AMP phosphorylase.